Reading from the N-terminus, the 383-residue chain is Lipid-A-disaccharide synthase (383 aa).

The protein belongs to the LpxB family.

It carries out the reaction a lipid X + a UDP-2-N,3-O-bis[(3R)-3-hydroxyacyl]-alpha-D-glucosamine = a lipid A disaccharide + UDP + H(+). Its pathway is bacterial outer membrane biogenesis; LPS lipid A biosynthesis. Condensation of UDP-2,3-diacylglucosamine and 2,3-diacylglucosamine-1-phosphate to form lipid A disaccharide, a precursor of lipid A, a phosphorylated glycolipid that anchors the lipopolysaccharide to the outer membrane of the cell. The protein is Lipid-A-disaccharide synthase of Alcanivorax borkumensis (strain ATCC 700651 / DSM 11573 / NCIMB 13689 / SK2).